The following is a 303-amino-acid chain: tRNA pseudouridine synthase-like 1 (303 aa).

The active-site Nucleophile is the Asp-66. Ser-84 bears the Phosphoserine mark. Substrate is bound at residue Tyr-130.

It belongs to the tRNA pseudouridine synthase TruA family.

It carries out the reaction a uridine in tRNA = a pseudouridine in tRNA. The chain is tRNA pseudouridine synthase-like 1 (PUSL1) from Homo sapiens (Human).